We begin with the raw amino-acid sequence, 251 residues long: MSKLNDLPASTLQFYTTASYPCSYLPEQLARSQVATPSHLIDTIVYGGLVQAGFRRSGAFTYRPFCDNCRACLPVRVVVDSLALRRSQRRSWNRHRHLVATQHDLYYHPDHYALYLRYQAQRHSGGGMDRDSREQYRHFLLPSNVDSKLVEFRENGVLRMVSIIDELPDGISSVYTFFDPDVPGASFGTYNILWQAHQCRELKLPYLYLGYWIKDSRKMAYKAAFRPLQALINGQWELLENLSDYPSCAFP.

The protein belongs to the R-transferase family. Bpt subfamily.

The protein resides in the cytoplasm. The enzyme catalyses N-terminal L-glutamyl-[protein] + L-leucyl-tRNA(Leu) = N-terminal L-leucyl-L-glutamyl-[protein] + tRNA(Leu) + H(+). It carries out the reaction N-terminal L-aspartyl-[protein] + L-leucyl-tRNA(Leu) = N-terminal L-leucyl-L-aspartyl-[protein] + tRNA(Leu) + H(+). In terms of biological role, functions in the N-end rule pathway of protein degradation where it conjugates Leu from its aminoacyl-tRNA to the N-termini of proteins containing an N-terminal aspartate or glutamate. The chain is Aspartate/glutamate leucyltransferase from Nitrosospira multiformis (strain ATCC 25196 / NCIMB 11849 / C 71).